Reading from the N-terminus, the 307-residue chain is Probable 2-methylisocitrate lyase 2 (307 aa).

A substrate-binding site is contributed by 53–55; the sequence is SGA. The Mg(2+) site is built by Asp-92 and Asp-94. Residues 129–130, Arg-164, Glu-194, 216–218, Arg-247, and Arg-276 each bind substrate; these read CG and NMT.

The protein belongs to the isocitrate lyase/PEP mutase superfamily. Methylisocitrate lyase family. Homotetramer; dimer of dimers. Mg(2+) serves as cofactor.

The enzyme catalyses (2S,3R)-3-hydroxybutane-1,2,3-tricarboxylate = pyruvate + succinate. It participates in organic acid metabolism; propanoate degradation. Involved in the catabolism of short chain fatty acids (SCFA) via the 2-methylcitrate cycle I (propionate degradation route). Catalyzes the thermodynamically favored C-C bond cleavage of (2R,3S)-2-methylisocitrate to yield pyruvate and succinate via an alpha-carboxy-carbanion intermediate. This chain is Probable 2-methylisocitrate lyase 2, found in Corynebacterium glutamicum (strain ATCC 13032 / DSM 20300 / JCM 1318 / BCRC 11384 / CCUG 27702 / LMG 3730 / NBRC 12168 / NCIMB 10025 / NRRL B-2784 / 534).